We begin with the raw amino-acid sequence, 482 residues long: U2 small nuclear ribonucleoprotein auxiliary factor 35 kDa subunit-related protein 2 (482 aa).

Residues 1 to 59 form a disordered region; that stretch reads MAAPEKMTFPEKPSHKKYRAALKKEKRKKRRQELARLRDSGLSQKEEEEDTFIEEQQLE. Over residues 14-31 the composition is skewed to basic residues; it reads SHKKYRAALKKEKRKKRR. Lys45 participates in a covalent cross-link: Glycyl lysine isopeptide (Lys-Gly) (interchain with G-Cter in SUMO2). The segment covering 46 to 58 has biased composition (acidic residues); it reads EEEEDTFIEEQQL. Lys62 participates in a covalent cross-link: Glycyl lysine isopeptide (Lys-Gly) (interchain with G-Cter in SUMO2). The disordered stretch occupies residues 115–135; that stretch reads QRKEREEEEQKRQEKKEKEEA. The C3H1-type 1 zinc-finger motif lies at 166-194; it reads EKDRANCPFYSKTGACRFGDRCSRKHNFP. The region spanning 198 to 304 is the RRM domain; the sequence is PTLLIKSMFT…RQLQCEFCPV (107 aa). Residues 306–333 form a C3H1-type 2 zinc finger; sequence RWKMAICGLFEIQQCPRGKHCNFLHVFR. Position 349 is a phosphoserine (Ser349). The interval 351–482 is disordered; that stretch reads DRTGSSFGKN…DRTVQSPKSK (132 aa). Basic and acidic residues-rich tracts occupy residues 360 to 375 and 383 to 398; these read NSER…DYYS and PSPD…SERK. Ser384 is subject to Phosphoserine. The segment covering 399–412 has biased composition (basic residues); that stretch reads SSRHRGKKSHKRTS. The span at 413 to 435 shows a compositional bias: basic and acidic residues; the sequence is KSRERHNSRSRGRNRDRSRDRSR. The span at 436 to 454 shows a compositional bias: basic residues; it reads GRGSRSRSRSRSRRSRRSR.

Component of the U11/U12 snRNPs that are part of the U12-type spliceosome. Interacts (via RS domain) with SRSF1 and SRSF2. Interacts with U2AF2/U2AF65. Post-translationally, phosphorylated in the RS domain by SRPK1. In terms of tissue distribution, widely expressed.

Its subcellular location is the nucleus. In terms of biological role, pre-mRNA-binding protein required for splicing of both U2- and U12-type introns. Selectively interacts with the 3'-splice site of U2- and U12-type pre-mRNAs and promotes different steps in U2 and U12 intron splicing. Recruited to U12 pre-mRNAs in an ATP-dependent manner and is required for assembly of the pre-spliceosome, a precursor to other spliceosomal complexes. For U2-type introns, it is selectively and specifically required for the second step of splicing. The chain is U2 small nuclear ribonucleoprotein auxiliary factor 35 kDa subunit-related protein 2 (ZRSR2) from Homo sapiens (Human).